A 334-amino-acid polypeptide reads, in one-letter code: Adenine deaminase (334 aa).

Positions 14, 16, and 194 each coordinate Zn(2+). Catalysis depends on glutamate 197, which acts as the Proton donor. Aspartate 275 contributes to the Zn(2+) binding site. Aspartate 276 contributes to the substrate binding site.

It belongs to the metallo-dependent hydrolases superfamily. Adenosine and AMP deaminases family. Adenine deaminase type 2 subfamily. The cofactor is Zn(2+).

It catalyses the reaction adenine + H2O + H(+) = hypoxanthine + NH4(+). Its function is as follows. Catalyzes the hydrolytic deamination of adenine to hypoxanthine. Plays an important role in the purine salvage pathway and in nitrogen catabolism. The protein is Adenine deaminase of Hahella chejuensis (strain KCTC 2396).